A 283-amino-acid chain; its full sequence is MSRSPLIARTVPALRRAADNLRKRKATIALVPTMGALHDGHVSLVRLAKRRASRVVVSIFVNPTQFAPTEDFGAYPRTWKADIAKLAAEDVDIVWHPGVEAMYPEGFATRIVPEGPALAGLEDRFRPHFFGGVATVVGKLFTQCRPDFAIFGEKDFQQLRVVTQMARDLDLGVKVIGSRTVRERDGLAMSSRNVYLSPQERQTATTLYRAMKDSAGRIRAGEAIASAMARGAATIKAAGFVLDYFEARHAETLAQVTSRKDGPLRILVAAKLGTTRLIDNIAV.

Residue 34 to 41 (MGALHDGH) participates in ATP binding. The active-site Proton donor is H41. Residue Q65 coordinates (R)-pantoate. Q65 contacts beta-alanine. 152 to 155 (GEKD) lines the ATP pocket. Q158 contributes to the (R)-pantoate binding site. ATP-binding positions include V181 and 189–192 (MSSR).

The protein belongs to the pantothenate synthetase family. As to quaternary structure, homodimer.

Its subcellular location is the cytoplasm. The enzyme catalyses (R)-pantoate + beta-alanine + ATP = (R)-pantothenate + AMP + diphosphate + H(+). Its pathway is cofactor biosynthesis; (R)-pantothenate biosynthesis; (R)-pantothenate from (R)-pantoate and beta-alanine: step 1/1. Catalyzes the condensation of pantoate with beta-alanine in an ATP-dependent reaction via a pantoyl-adenylate intermediate. The polypeptide is Pantothenate synthetase 2 (Bradyrhizobium diazoefficiens (strain JCM 10833 / BCRC 13528 / IAM 13628 / NBRC 14792 / USDA 110)).